The following is a 235-amino-acid chain: Phosphoribosylaminoimidazole-succinocarboxamide synthase (235 aa).

Belongs to the SAICAR synthetase family.

It catalyses the reaction 5-amino-1-(5-phospho-D-ribosyl)imidazole-4-carboxylate + L-aspartate + ATP = (2S)-2-[5-amino-1-(5-phospho-beta-D-ribosyl)imidazole-4-carboxamido]succinate + ADP + phosphate + 2 H(+). Its pathway is purine metabolism; IMP biosynthesis via de novo pathway; 5-amino-1-(5-phospho-D-ribosyl)imidazole-4-carboxamide from 5-amino-1-(5-phospho-D-ribosyl)imidazole-4-carboxylate: step 1/2. In Chloroherpeton thalassium (strain ATCC 35110 / GB-78), this protein is Phosphoribosylaminoimidazole-succinocarboxamide synthase.